The following is a 342-amino-acid chain: Dihydroorotase (342 aa).

Zn(2+) is bound by residues His13 and His15. Residues 15-17 (HLR) and Asn41 each bind substrate. Zn(2+)-binding residues include Lys98, His135, and His173. Lys98 is modified (N6-carboxylysine). His135 contacts substrate. Leu218 is a substrate binding site. Asp246 contributes to the Zn(2+) binding site. Residue Asp246 is part of the active site. 2 residues coordinate substrate: His250 and Ala262.

Belongs to the metallo-dependent hydrolases superfamily. DHOase family. Class II DHOase subfamily. Homodimer. Zn(2+) serves as cofactor.

It carries out the reaction (S)-dihydroorotate + H2O = N-carbamoyl-L-aspartate + H(+). Its pathway is pyrimidine metabolism; UMP biosynthesis via de novo pathway; (S)-dihydroorotate from bicarbonate: step 3/3. Its function is as follows. Catalyzes the reversible cyclization of carbamoyl aspartate to dihydroorotate. The protein is Dihydroorotase of Vibrio vulnificus (strain YJ016).